The primary structure comprises 569 residues: MKQSFFLVPTMREVPADADVVSHQLMLRAGMIRQVAAGIYTYLPLARRVIRKIESIVREELDQTGAQEITMPTLHPAELWQESGRWEKYGDELMRLTDRHNRQFALGPTHEEVITSLIRDSINSYKKLPLNVYQIQSKFRDERRPRFGLLRGREFIMKDAYSFHTGGESLDEMYKVMYDAYSRIFRRAGLNVRPVIADSGAIGGKDTHEFMALADVGEDTIAYSDQSDYAANIEMAAVKVNYTRPDEPLLERELVDTGDAKTIRAVAERLSVQEEKIIKSLLVSIDDEWALILLRGDHELNDIKLKHALGASDIRLATEEEVLEVIGTEVGTIGPVDVKGVKVIADHGIKSIVNGVCGANESNKHFIHVNEERDFTVDTYADLRFIQEGDPSPDGKGTIRFAQGIEVGQVFKLGTVYSEKLGATFLDENGKSQPMLMGCYGIGVSRMVAAVIEQHHDEDGIVWPTSVAPFDVHVLALNVKKEEQMKLADSVYHSLQQAGLDVLLDDRPERAGVKFKDADLIGLPLRVAVGKRADEGYVEVKVRKTGEVIEVHADELVPTIQAKLQQLAE.

It belongs to the class-II aminoacyl-tRNA synthetase family. ProS type 1 subfamily. In terms of assembly, homodimer.

Its subcellular location is the cytoplasm. It carries out the reaction tRNA(Pro) + L-proline + ATP = L-prolyl-tRNA(Pro) + AMP + diphosphate. In terms of biological role, catalyzes the attachment of proline to tRNA(Pro) in a two-step reaction: proline is first activated by ATP to form Pro-AMP and then transferred to the acceptor end of tRNA(Pro). As ProRS can inadvertently accommodate and process non-cognate amino acids such as alanine and cysteine, to avoid such errors it has two additional distinct editing activities against alanine. One activity is designated as 'pretransfer' editing and involves the tRNA(Pro)-independent hydrolysis of activated Ala-AMP. The other activity is designated 'posttransfer' editing and involves deacylation of mischarged Ala-tRNA(Pro). The misacylated Cys-tRNA(Pro) is not edited by ProRS. This chain is Proline--tRNA ligase, found in Halalkalibacterium halodurans (strain ATCC BAA-125 / DSM 18197 / FERM 7344 / JCM 9153 / C-125) (Bacillus halodurans).